The primary structure comprises 471 residues: Ribonuclease 3 (471 aa).

Over residues 1-10 (MGSKVAGKKK) the composition is skewed to basic residues. Disordered stretches follow at residues 1 to 29 (MGSK…RENI) and 168 to 189 (NLNE…PTKA). Residues 20 to 29 (ENGSQQRENI) are compositionally biased toward polar residues. Acidic residues predominate over residues 172–184 (KEDEEEDEGEDSY). The RNase III domain maps to 227–331 (LSGSEMINAH…YIGGLMEDDP (105 aa)). Positions 369–437 (NAKRQLYSLI…AENALRDKKM (69 aa)) constitute a DRBM domain. Residues 451–471 (SESVLKDPSQKNKKRKFSDTS) form a disordered region. The span at 461–471 (KNKKRKFSDTS) shows a compositional bias: basic residues.

The catalysed reaction is Endonucleolytic cleavage to 5'-phosphomonoester.. In terms of biological role, dsRNA-specific nuclease that cleaves eukaryotic pre-ribosomal RNA at the U3 snoRNP-dependent A0 site in the 5'-external transcribed spacer (ETS) and in the 3'-ETS. In vitro, cleaves synthetic 5'-ETS RNA A0 site in the absence of snoRNA or other factors. Has an essential growth function in addition to pre-rRNA processing. The chain is Ribonuclease 3 (RNT1) from Saccharomyces cerevisiae (strain ATCC 204508 / S288c) (Baker's yeast).